A 141-amino-acid polypeptide reads, in one-letter code: ATP synthase epsilon chain (141 aa).

The protein belongs to the ATPase epsilon chain family. In terms of assembly, F-type ATPases have 2 components, CF(1) - the catalytic core - and CF(0) - the membrane proton channel. CF(1) has five subunits: alpha(3), beta(3), gamma(1), delta(1), epsilon(1). CF(0) has three main subunits: a, b and c.

The protein resides in the cell membrane. In terms of biological role, produces ATP from ADP in the presence of a proton gradient across the membrane. This chain is ATP synthase epsilon chain, found in Natranaerobius thermophilus (strain ATCC BAA-1301 / DSM 18059 / JW/NM-WN-LF).